The following is a 324-amino-acid chain: Phospho-N-acetylmuramoyl-pentapeptide-transferase (324 aa).

10 helical membrane passes run 5–25 (GLLV…PLFI), 52–72 (PTMG…IMAI), 77–97 (LGAE…IGFL), 122–142 (VIAI…YIMI), 149–169 (FELG…GSNA), 176–196 (LDGL…IIAV), 201–221 (FGVA…LVFN), 227–247 (VFMG…VAIL), 253–273 (LLVI…IQVI), and 302–322 (VVVT…YIGV).

It belongs to the glycosyltransferase 4 family. MraY subfamily. Mg(2+) is required as a cofactor.

The protein localises to the cell membrane. It carries out the reaction UDP-N-acetyl-alpha-D-muramoyl-L-alanyl-gamma-D-glutamyl-meso-2,6-diaminopimeloyl-D-alanyl-D-alanine + di-trans,octa-cis-undecaprenyl phosphate = di-trans,octa-cis-undecaprenyl diphospho-N-acetyl-alpha-D-muramoyl-L-alanyl-D-glutamyl-meso-2,6-diaminopimeloyl-D-alanyl-D-alanine + UMP. The protein operates within cell wall biogenesis; peptidoglycan biosynthesis. In terms of biological role, catalyzes the initial step of the lipid cycle reactions in the biosynthesis of the cell wall peptidoglycan: transfers peptidoglycan precursor phospho-MurNAc-pentapeptide from UDP-MurNAc-pentapeptide onto the lipid carrier undecaprenyl phosphate, yielding undecaprenyl-pyrophosphoryl-MurNAc-pentapeptide, known as lipid I. The chain is Phospho-N-acetylmuramoyl-pentapeptide-transferase from Bacillus anthracis.